Here is a 217-residue protein sequence, read N- to C-terminus: 3,4-dihydroxy-2-butanone 4-phosphate synthase (217 aa).

D-ribulose 5-phosphate is bound by residues 37-38 (RE), Asp-42, 150-154 (RGGHT), and Glu-174. Glu-38 is a binding site for Mg(2+). Residue His-153 participates in Mg(2+) binding.

Belongs to the DHBP synthase family. As to quaternary structure, homodimer. Requires Mg(2+) as cofactor. Mn(2+) serves as cofactor.

It catalyses the reaction D-ribulose 5-phosphate = (2S)-2-hydroxy-3-oxobutyl phosphate + formate + H(+). The protein operates within cofactor biosynthesis; riboflavin biosynthesis; 2-hydroxy-3-oxobutyl phosphate from D-ribulose 5-phosphate: step 1/1. Its function is as follows. Catalyzes the conversion of D-ribulose 5-phosphate to formate and 3,4-dihydroxy-2-butanone 4-phosphate. This Enterobacter sp. (strain 638) protein is 3,4-dihydroxy-2-butanone 4-phosphate synthase.